The chain runs to 672 residues: tRNA 5-methylaminomethyl-2-thiouridine biosynthesis bifunctional protein MnmC (672 aa).

Positions 1-241 are tRNA (mnm(5)s(2)U34)-methyltransferase; it reads MLKVTTAHIH…KRECLQGFKP (241 aa). The FAD-dependent cmnm(5)s(2)U34 oxidoreductase stretch occupies residues 271–672; sequence IGGGISSLFS…RKLLKGTPVK (402 aa).

This sequence in the N-terminal section; belongs to the methyltransferase superfamily. tRNA (mnm(5)s(2)U34)-methyltransferase family. The protein in the C-terminal section; belongs to the DAO family. FAD serves as cofactor.

The protein resides in the cytoplasm. The enzyme catalyses 5-aminomethyl-2-thiouridine(34) in tRNA + S-adenosyl-L-methionine = 5-methylaminomethyl-2-thiouridine(34) in tRNA + S-adenosyl-L-homocysteine + H(+). In terms of biological role, catalyzes the last two steps in the biosynthesis of 5-methylaminomethyl-2-thiouridine (mnm(5)s(2)U) at the wobble position (U34) in tRNA. Catalyzes the FAD-dependent demodification of cmnm(5)s(2)U34 to nm(5)s(2)U34, followed by the transfer of a methyl group from S-adenosyl-L-methionine to nm(5)s(2)U34, to form mnm(5)s(2)U34. This is tRNA 5-methylaminomethyl-2-thiouridine biosynthesis bifunctional protein MnmC from Mannheimia succiniciproducens (strain KCTC 0769BP / MBEL55E).